We begin with the raw amino-acid sequence, 1124 residues long: DNA-directed RNA polymerase subunit Rpo2 (1124 aa).

Cys1061, Cys1064, Cys1079, and His1082 together coordinate Zn(2+).

The protein belongs to the RNA polymerase beta chain family. Part of the 13-subunit RNA polymerase complex. Zn(2+) serves as cofactor.

It is found in the cytoplasm. It catalyses the reaction RNA(n) + a ribonucleoside 5'-triphosphate = RNA(n+1) + diphosphate. In terms of biological role, DNA-dependent RNA polymerase (RNAP) catalyzes the transcription of DNA into RNA using the four ribonucleoside triphosphates as substrates. This subunit is involved in DNA promoter recognition. The protein is DNA-directed RNA polymerase subunit Rpo2 of Saccharolobus solfataricus (strain ATCC 35092 / DSM 1617 / JCM 11322 / P2) (Sulfolobus solfataricus).